The sequence spans 60 residues: Large ribosomal subunit protein uL30 (60 aa).

It belongs to the universal ribosomal protein uL30 family. Part of the 50S ribosomal subunit.

The chain is Large ribosomal subunit protein uL30 from Aromatoleum aromaticum (strain DSM 19018 / LMG 30748 / EbN1) (Azoarcus sp. (strain EbN1)).